The sequence spans 667 residues: MTQLSRFLYGGDYNPDQWPEETWSKDIHVFKKADINSATINIFSWALLEPREGKYNFSKLDKVVQQLSDANFDIVMGTATAAMPAWMFKKYPDIARVDYQDRRHVFGQRHNFCPNSSNYQRLAGELEKQLVERYKDNKHIVFWHINNEYGGNCYCENCQNAFKKWLKNKYKTVEGLNKAWNMNVWSHTIYDWDEIVVPNELGDVWGIKGSETIVAGLSIDYLRFQSESMQNLFKMEKKIIKKFDPETPVTTNFHGLPNKMVDYQKWAKGQDIISYDSYPTYDAPAYKAAFLYDLMRSLKHQPFMLMESAPSQVNWQPYSPLKRPGQMEATEFQAVAHGADTVQFFRLKQAVGGSEKFHSAVIAHSQRTVTRVFKELADLGKKLKNAGPTILGSKTKARFAIVFDWSNFWSYEYVDGITQDLNYVDSILDYYRQFYERNIPTDIIGVDDDFSNYDLVVAPVLYMVKHGLDKKINDYVENGGNFVTTYMSGMVNSSDNVYLGGYPGPLKEVTGIWVEESDAVVPGQKIKVLMNGKDYDTGLICNLIHPNDAKILATYASEFYAGTPAVTENQYGKGRAWYIGTRLEHQGLTQLFNHIIFETGVESLVCDSHKLEITKRVTEDGKELYFVLNMSNEERTLPSKFTGYEDILTGEKAHKDMKGWDVQVLRN.

Residue Arg-109 participates in substrate binding. Residue Cys-113 coordinates Zn(2+). Asn-147 is a binding site for substrate. Catalysis depends on Glu-148, which acts as the Proton donor. Positions 153, 155, and 158 each coordinate Zn(2+). Catalysis depends on Glu-307, which acts as the Nucleophile. Residues Trp-315 and 355–358 each bind substrate; that span reads EKFH.

Belongs to the glycosyl hydrolase 42 family.

It carries out the reaction Hydrolysis of terminal non-reducing beta-D-galactose residues in beta-D-galactosides.. In terms of biological role, hydrolyzes lactose, oNP-galactoside (oNPG), pNP-galactosidase (pNPG), pNP-mannoside, pNP-glucoside, pNP-fucoside, pNP-N-acetylglucosamide, but not pNP-arabinoside or 4-methylumbelliferyl-beta-galactopyranoside (MUG). Transgalactosylates lactose at 10 g/L, but not at 270 g/L. This is Beta-galactosidase LacA from Lactobacillus acidophilus.